The chain runs to 363 residues: NADH-quinone oxidoreductase subunit H (363 aa).

The next 10 helical transmembrane spans lie at 29–49, 62–82, 96–116, 127–147, 163–183, 202–222, 239–257, 264–286, 299–319, and 339–359; these read VLKILLIAVPVIVTVAFYVVW, GPMYVGMGIFQAFADVFKLLF, FIIAPLLTLAPAFAAWSVVPF, VGLLYLLAMTSLGVYGIILAG, AAQVVSYEIAMGFALVGVMIA, FFDWFLIPLFPLFIVYWVSGV, IVAGHMVEYSGGAFALFFL, ILVSFLISIFFLGGWLSPIQGWV, TGGWPWLLMKVFFFASAYIWF, and FIPLTIVWIAVTALMVFYGVI.

This sequence belongs to the complex I subunit 1 family. As to quaternary structure, NDH-1 is composed of 14 different subunits. Subunits NuoA, H, J, K, L, M, N constitute the membrane sector of the complex.

The protein resides in the cell inner membrane. The catalysed reaction is a quinone + NADH + 5 H(+)(in) = a quinol + NAD(+) + 4 H(+)(out). In terms of biological role, NDH-1 shuttles electrons from NADH, via FMN and iron-sulfur (Fe-S) centers, to quinones in the respiratory chain. The immediate electron acceptor for the enzyme in this species is believed to be ubiquinone. Couples the redox reaction to proton translocation (for every two electrons transferred, four hydrogen ions are translocated across the cytoplasmic membrane), and thus conserves the redox energy in a proton gradient. This subunit may bind ubiquinone. The chain is NADH-quinone oxidoreductase subunit H from Xanthomonas campestris pv. campestris (strain 8004).